The chain runs to 988 residues: Protein SEMI-ROLLED LEAF 2 (988 aa).

The interval 844-865 (SVDGGLHESPITNTGSSISKTT) is disordered. The segment covering 853-865 (PITNTGSSISKTT) has biased composition (polar residues).

As to expression, expressed in root tips, and in the vascular bundles of leaf blades, leaf sheaths, and roots, especially in their sclerenchymatous cells.

The protein resides in the nucleus. Its subcellular location is the cytoplasm. Functionally, functions in regulating leaf rolling through abaxial side leaf cell differentiation. May be involved in the transdifferentiation process from mesophyll cells to sclerenchymatous cells. The chain is Protein SEMI-ROLLED LEAF 2 from Oryza sativa subsp. japonica (Rice).